The primary structure comprises 350 residues: Purine-binding protein BAB2_0673 (350 aa).

An N-terminal signal peptide occupies residues 1–17; sequence MVIATVAGFMLGGAAHA. Residues Trp36, Trp185, and Asp211 each contribute to the adenine site.

This sequence belongs to the BMP lipoprotein family.

In terms of biological role, binds adenine and probably also other purines, such as guanine. May play a role in adenine and guanine uptake. May be part of an ABC-type uptake system for adenine and similar ligands. This Brucella abortus (strain 2308) protein is Purine-binding protein BAB2_0673.